We begin with the raw amino-acid sequence, 318 residues long: UDP-N-acetylenolpyruvoylglucosamine reductase (318 aa).

In terms of domain architecture, FAD-binding PCMH-type spans 38-204 (IGGVCPVIVE…LGIEILLKEG (167 aa)). Residue arginine 182 is part of the active site. Residues 212-229 (SLKDKRDRRNSSQPENKK) are compositionally biased toward basic and acidic residues. Residues 212–232 (SLKDKRDRRNSSQPENKKSAG) are disordered. The active-site Proton donor is the serine 233. Glutamate 310 is a catalytic residue.

Belongs to the MurB family. The cofactor is FAD.

The protein resides in the cytoplasm. The catalysed reaction is UDP-N-acetyl-alpha-D-muramate + NADP(+) = UDP-N-acetyl-3-O-(1-carboxyvinyl)-alpha-D-glucosamine + NADPH + H(+). It participates in cell wall biogenesis; peptidoglycan biosynthesis. Cell wall formation. This chain is UDP-N-acetylenolpyruvoylglucosamine reductase, found in Leptospira interrogans serogroup Icterohaemorrhagiae serovar copenhageni (strain Fiocruz L1-130).